The sequence spans 186 residues: MKIYLASKSPRRQELLKKIYSRFEIIPPEVKEEVYSLNPMELALTLSRQKAENVAAKIKEGVIIAADTVVAVEGKVLGKPRDEEEAYFMLKTLSGREHEVYTGVTLMELPQKREKSFVEVTKVWFYPLTDEEIKSYIDSREPFDKAGAYGIQGKGALFVAKIEGCYFNVVGLPVARLYRELREWGY.

The Proton acceptor role is filled by aspartate 67.

It belongs to the Maf family. YhdE subfamily. It depends on a divalent metal cation as a cofactor.

Its subcellular location is the cytoplasm. It catalyses the reaction dTTP + H2O = dTMP + diphosphate + H(+). The catalysed reaction is UTP + H2O = UMP + diphosphate + H(+). In terms of biological role, nucleoside triphosphate pyrophosphatase that hydrolyzes dTTP and UTP. May have a dual role in cell division arrest and in preventing the incorporation of modified nucleotides into cellular nucleic acids. In Carboxydothermus hydrogenoformans (strain ATCC BAA-161 / DSM 6008 / Z-2901), this protein is dTTP/UTP pyrophosphatase.